Reading from the N-terminus, the 249-residue chain is Inner membrane protein pE248R (249 aa).

Glycine 2 carries N-myristoyl glycine; by host lipidation. The Cytoplasmic portion of the chain corresponds to 2–199 (GGSTSKNSFK…ADAISAVFKN (198 aa)). A helical membrane pass occupies residues 200–220 (IMVAAVVIVVIIVGFIAVFYF). Residues 221–249 (LHSRHRHEEEEEAEPLITSKILKNAAVSQ) are Extracellular-facing.

Belongs to the asfivirus E248R family. As to quaternary structure, interacts with A151R.

It is found in the host membrane. It localises to the virion membrane. Its function is as follows. Essential for viral fusion with host endosomal membrane and core release. This African swine fever virus (isolate Pig/Kenya/KEN-50/1950) (ASFV) protein is Inner membrane protein pE248R.